The sequence spans 430 residues: tRNA(Ile)-lysidine synthase (430 aa).

Residue 21–26 (SGGLDS) coordinates ATP.

This sequence belongs to the tRNA(Ile)-lysidine synthase family.

The protein localises to the cytoplasm. The enzyme catalyses cytidine(34) in tRNA(Ile2) + L-lysine + ATP = lysidine(34) in tRNA(Ile2) + AMP + diphosphate + H(+). Ligates lysine onto the cytidine present at position 34 of the AUA codon-specific tRNA(Ile) that contains the anticodon CAU, in an ATP-dependent manner. Cytidine is converted to lysidine, thus changing the amino acid specificity of the tRNA from methionine to isoleucine. This is tRNA(Ile)-lysidine synthase from Salmonella agona (strain SL483).